The following is a 288-amino-acid chain: Bifunctional protein FolD (288 aa).

NADP(+) contacts are provided by residues 166–168 (GAS) and Ile-232.

Belongs to the tetrahydrofolate dehydrogenase/cyclohydrolase family. As to quaternary structure, homodimer.

The enzyme catalyses (6R)-5,10-methylene-5,6,7,8-tetrahydrofolate + NADP(+) = (6R)-5,10-methenyltetrahydrofolate + NADPH. It carries out the reaction (6R)-5,10-methenyltetrahydrofolate + H2O = (6R)-10-formyltetrahydrofolate + H(+). It participates in one-carbon metabolism; tetrahydrofolate interconversion. In terms of biological role, catalyzes the oxidation of 5,10-methylenetetrahydrofolate to 5,10-methenyltetrahydrofolate and then the hydrolysis of 5,10-methenyltetrahydrofolate to 10-formyltetrahydrofolate. The protein is Bifunctional protein FolD of Citrobacter koseri (strain ATCC BAA-895 / CDC 4225-83 / SGSC4696).